The following is a 116-amino-acid chain: Chondroitin proteoglycan 7 (116 aa).

Residues 1 to 19 form the signal peptide; the sequence is MQTITILALIACVAVPIFA. The tract at residues 29 to 102 is disordered; that stretch reads DVVESSGEGS…NAVVASDSPK (74 aa). Low complexity-rich tracts occupy residues 32-41 and 48-58; these read ESSGEGSGES and VESSGEGSGES. Residues S68, S72, S76, S84, and S88 are each glycosylated (O-linked (Xyl...) (chondroitin sulfate) serine).

The polypeptide is Chondroitin proteoglycan 7 (Caenorhabditis elegans).